Here is a 186-residue protein sequence, read N- to C-terminus: Nicotinamide-nucleotide adenylyltransferase (186 aa).

The protein belongs to the archaeal NMN adenylyltransferase family.

The protein localises to the cytoplasm. It catalyses the reaction beta-nicotinamide D-ribonucleotide + ATP + H(+) = diphosphate + NAD(+). It participates in cofactor biosynthesis; NAD(+) biosynthesis; NAD(+) from nicotinamide D-ribonucleotide: step 1/1. This Thermococcus sibiricus (strain DSM 12597 / MM 739) protein is Nicotinamide-nucleotide adenylyltransferase.